Reading from the N-terminus, the 456-residue chain is Putative F-box/LRR-repeat protein At3g18150 (456 aa).

Residues 30–78 (VDSISSLPDVILQHILSFIPTKLAITTSLLSKRWRHVWCDTPSLSFNDY) form the F-box domain. LRR repeat units follow at residues 177 to 202 (TCLLSDESMANILFGCPILESLTLDH), 203 to 213 (CGGLRVLDLSK), 228 to 253 (VPELTAMQIVAPHTHCLRLRNSKLPC), 278 to 303 (KADFLQVTLLKMLEKLHNVEKLTLGG), 333 to 358 (IFQYVIPGIERVLQNSPDLKKLTLLT), and 396 to 422 (CLDVESEHVVSFVELMLKNTKALDKMV).

The polypeptide is Putative F-box/LRR-repeat protein At3g18150 (Arabidopsis thaliana (Mouse-ear cress)).